An 82-amino-acid polypeptide reads, in one-letter code: Antitoxin MazE2 (82 aa).

As to quaternary structure, probably forms a complex with cognate toxin MazF2.

Antitoxin component of a type II toxin-antitoxin (TA) system. Labile antitoxin that binds to cognate MazF2 toxin and counteracts its endoribonuclease activity. The polypeptide is Antitoxin MazE2 (mazE2) (Mycobacterium bovis (strain ATCC BAA-935 / AF2122/97)).